We begin with the raw amino-acid sequence, 166 residues long: Gem-associated protein 6 (166 aa).

The Sm domain occupies 4–73; it reads WMKKSPLEWE…VQTVETISEG (70 aa). The AD domain maps to 68–166; the sequence is ETISEGDHRV…LIQGHLSASQ (99 aa). Phosphoserine is present on residues S94 and S165.

In terms of assembly, part of the core SMN complex that contains SMN1, GEMIN2/SIP1, DDX20/GEMIN3, GEMIN4, GEMIN5, GEMIN6, GEMIN7, GEMIN8 and STRAP/UNRIP. Part of the SMN-Sm complex that contains SMN1, GEMIN2/SIP1, DDX20/GEMIN3, GEMIN4, GEMIN5, GEMIN6, GEMIN7, GEMIN8, STRAP/UNRIP and the Sm proteins SNRPB, SNRPD1, SNRPD2, SNRPD3, SNRPE, SNRPF and SNRPG. Interacts with GEMIN7; the interaction is direct. Interacts with GEMIN8; the interaction is direct. Interacts with SNRPB, SNRPD2, SNRPD3 and SNRPE; the interaction is direct.

The protein localises to the nucleus. It is found in the nucleoplasm. It localises to the gem. Its subcellular location is the cytoplasm. Its function is as follows. The SMN complex catalyzes the assembly of small nuclear ribonucleoproteins (snRNPs), the building blocks of the spliceosome, and thereby plays an important role in the splicing of cellular pre-mRNAs. Most spliceosomal snRNPs contain a common set of Sm proteins SNRPB, SNRPD1, SNRPD2, SNRPD3, SNRPE, SNRPF and SNRPG that assemble in a heptameric protein ring on the Sm site of the small nuclear RNA to form the core snRNP (Sm core). In the cytosol, the Sm proteins SNRPD1, SNRPD2, SNRPE, SNRPF and SNRPG are trapped in an inactive 6S pICln-Sm complex by the chaperone CLNS1A that controls the assembly of the core snRNP. To assemble core snRNPs, the SMN complex accepts the trapped 5Sm proteins from CLNS1A forming an intermediate. Binding of snRNA inside 5Sm triggers eviction of the SMN complex, thereby allowing binding of SNRPD3 and SNRPB to complete assembly of the core snRNP. The protein is Gem-associated protein 6 (Gemin6) of Mus musculus (Mouse).